The chain runs to 90 residues: Small ribosomal subunit protein bS20 (90 aa).

It belongs to the bacterial ribosomal protein bS20 family.

In terms of biological role, binds directly to 16S ribosomal RNA. In Francisella tularensis subsp. tularensis (strain FSC 198), this protein is Small ribosomal subunit protein bS20.